Here is a 259-residue protein sequence, read N- to C-terminus: UPF0246 protein Pmen_1032 (259 aa).

This sequence belongs to the UPF0246 family.

The sequence is that of UPF0246 protein Pmen_1032 from Ectopseudomonas mendocina (strain ymp) (Pseudomonas mendocina).